The sequence spans 254 residues: Type III pantothenate kinase (254 aa).

6–13 (DVGNTNTV) contacts ATP. Substrate is bound by residues Y100 and 107–110 (GADR). D109 (proton acceptor) is an active-site residue. D129 is a binding site for K(+). T132 is a binding site for ATP. T184 lines the substrate pocket.

The protein belongs to the type III pantothenate kinase family. In terms of assembly, homodimer. The cofactor is NH4(+). Requires K(+) as cofactor.

Its subcellular location is the cytoplasm. The enzyme catalyses (R)-pantothenate + ATP = (R)-4'-phosphopantothenate + ADP + H(+). It participates in cofactor biosynthesis; coenzyme A biosynthesis; CoA from (R)-pantothenate: step 1/5. Catalyzes the phosphorylation of pantothenate (Pan), the first step in CoA biosynthesis. The sequence is that of Type III pantothenate kinase from Anaeromyxobacter sp. (strain Fw109-5).